We begin with the raw amino-acid sequence, 716 residues long: Mitogen-activated protein kinase kinase kinase 5 (716 aa).

Residues 1 to 27 (MRWLPQISFSSPSSSPSSSLKPVASYS) are compositionally biased toward low complexity. 4 disordered regions span residues 1–42 (MRWL…DRFH), 74–98 (ASTS…VPRS), 119–180 (AANA…YWVN), and 238–302 (YDIT…VTNG). A compositionally biased stretch (basic and acidic residues) spans 31–40 (DPDRNQDRDR). The span at 75-91 (STSSSTFDSGLTRSPSA) shows a compositional bias: polar residues. The segment covering 124 to 137 (GLDDRDRDPERLIS) has biased composition (basic and acidic residues). 3 stretches are compositionally biased toward polar residues: residues 138 to 150 (DRTS…TSVN), 162 to 173 (ENSSYQDFSPRN), and 242 to 251 (AFSTDNSPIH). A compositionally biased stretch (low complexity) spans 263–273 (RSPQPSRPSSP). The Protein kinase domain occupies 346-607 (WKKGKLIGRG…ASMLLEHRFL (262 aa)). ATP is bound by residues 352-360 (IGRGTFGSV) and Lys-375. Asp-472 functions as the Proton acceptor in the catalytic mechanism. Over residues 610 to 633 (SLQPTSPSNSDVSQLFNGMNITEP) the composition is skewed to polar residues. The disordered stretch occupies residues 610-716 (SLQPTSPSNS…RRTGVTSDHL (107 aa)). Residues Ser-617 and Ser-622 each carry the phosphoserine; by PBL27 modification. A compositionally biased stretch (basic and acidic residues) spans 634–648 (SSRREKPNFKLDQVP). Polar residues-rich tracts occupy residues 652–661 (NMTSSESESG) and 674–685 (LTGTVNRLSPRS). Phosphoserine; by PBL27 is present on residues Ser-658 and Ser-660. A Phosphothreonine; by PBL27 modification is found at Thr-677. Position 685 is a phosphoserine; by PBL27 (Ser-685). The segment covering 703–716 (SSDRRRTGVTSDHL) has biased composition (basic and acidic residues).

This sequence belongs to the protein kinase superfamily. STE Ser/Thr protein kinase family. MAP kinase kinase kinase subfamily. As to quaternary structure, interacts with PBL27 at the plasma membrane; disassociation is induced by chitin perception by the CERK1 complex. Interacts with MKK2, MKK4, and MKK5 mainly in the cytosol. Post-translationally, phosphorylated by PBL27 during chitin-mediated signaling in a CERK1-dependent manner. In terms of tissue distribution, mostly expressed in flower buds. Also present in pollen, roots, leaves and seedlings, and, at low levels, in stems and immature siliques.

It is found in the cell membrane. Its subcellular location is the cytoplasm. The protein resides in the cytosol. It catalyses the reaction L-seryl-[protein] + ATP = O-phospho-L-seryl-[protein] + ADP + H(+). The enzyme catalyses L-threonyl-[protein] + ATP = O-phospho-L-threonyl-[protein] + ADP + H(+). Its function is as follows. Mitogen-activated protein kinase (MAPK) involved in the transduction of signal between the host cell surface chitin receptor complex CERK1-LYK5 and the intracellular MAPK cascade that leads to chitin-induced immunity. Phosphorylates and activates MAPK targets (e.g. MKK4, MKK5, and possibly MKK2) when phosphorylated by PBL27 after elicitation by chitin. Required for resistance to the fungus A.brassicicola. The chain is Mitogen-activated protein kinase kinase kinase 5 from Arabidopsis thaliana (Mouse-ear cress).